The sequence spans 727 residues: Beta-galactosidase 2 (727 aa).

Positions 1-27 are cleaved as a signal peptide; it reads MSMHFRNKAWIILAILCFSSLIHSTEA. Residue E185 is the Proton donor of the active site. The Nucleophile role is filled by E254. N255 carries N-linked (GlcNAc...) asparagine glycosylation.

This sequence belongs to the glycosyl hydrolase 35 family. In terms of tissue distribution, ubiquitous, with higher expression levels in roots and siliques.

The protein resides in the secreted. The protein localises to the extracellular space. It is found in the apoplast. It carries out the reaction Hydrolysis of terminal non-reducing beta-D-galactose residues in beta-D-galactosides.. This Arabidopsis thaliana (Mouse-ear cress) protein is Beta-galactosidase 2 (BGAL2).